A 375-amino-acid polypeptide reads, in one-letter code: MVSPVVHRHAAGGGSGGDDDDQACMYALELLGGSVVSMTLKAAIELGLVDELLAAAGAAVTAEELAARLRLPAAVAAAAAVDRMLRLLASYGVVRCATEAGPDGKARRSYAAAPVCKWLAAGSSSGEGSMAPLGLLNLDKVFMENWYYLKEAVSEGGTAFDKAYGTSLFQYLGQDGNEPSNTLFNQAMASHSVVITNKLLQFFRGFDAGAGVDVLVDVGGGVGATLRMITARHPHLRGVNYDLPHVIAQAPPVEGVEHIGGSMFDHVPSGSAILLKWILHLWGDEECVKILKNCYKALPAKGKVILVEYVLPASPEATLAAQEAFRLDVMMLNRLAGGKERTQQEFTDLAVDAGFSGDCKPTYIFTNVWALEFTK.

A substrate-binding site is contributed by 136 to 142 (LNLDKVF). Residues 168–188 (LFQYLGQDGNEPSNTLFNQAM) form a substrate binding region. S-adenosyl-L-methionine is bound by residues glycine 219, aspartate 242, methionine 263, and lysine 276. The active-site Proton acceptor is histidine 280.

This sequence belongs to the class I-like SAM-binding methyltransferase superfamily. Cation-independent O-methyltransferase family. COMT subfamily.

The catalysed reaction is (2S)-naringenin + S-adenosyl-L-methionine = (2S)-sakuranetin + S-adenosyl-L-homocysteine + H(+). In terms of biological role, S-adenosyl-L-methionine-dependent methyltransferase involved in the biosynthesis of the sakuranetin, an inducible defense mechanism of O.sativa against pathogen attack. This chain is Naringenin 7-O-methyltransferase, found in Oryza sativa subsp. japonica (Rice).